A 221-amino-acid chain; its full sequence is UPF0758 protein PC1_4100 (221 aa).

Positions 99–221 (AMLNPQATGQ…YVSFAERGWI (123 aa)) constitute an MPN domain. Residues histidine 170, histidine 172, and aspartate 183 each coordinate Zn(2+). Positions 170–183 (HNHPSGKAEPSQAD) match the JAMM motif motif.

This sequence belongs to the UPF0758 family. YicR subfamily.

This Pectobacterium carotovorum subsp. carotovorum (strain PC1) protein is UPF0758 protein PC1_4100.